A 34-amino-acid chain; its full sequence is MSDIN-like toxin proprotein 4 (34 aa).

Residues 1–10 constitute a propeptide that is removed on maturation; the sequence is MSDINTARLP. The segment at residues 11–20 is a cross-link (cyclopeptide (Leu-Pro)); that stretch reads LFLPPVRMPP. A propeptide spanning residues 21-34 is cleaved from the precursor; it reads CVGDDIEMVLTRGE.

The protein belongs to the MSDIN fungal toxin family. Post-translationally, processed by the macrocyclase-peptidase enzyme POPB to yield a toxic cyclic decapeptide. POPB first removes 10 residues from the N-terminus. Conformational trapping of the remaining peptide forces the enzyme to release this intermediate rather than proceed to macrocyclization. The enzyme rebinds the remaining peptide in a different conformation and catalyzes macrocyclization of the N-terminal 10 residues.

Probable toxin that belongs to the MSDIN-like toxin family responsible for a large number of food poisoning cases and deaths. The protein is MSDIN-like toxin proprotein 4 of Amanita bisporigera (Destroying angel).